The primary structure comprises 189 residues: Interferon alpha-4 (189 aa).

The signal sequence occupies residues 1–23 (MALSFSLLMAVLVLSYKSICSLG). 2 cysteine pairs are disulfide-bonded: Cys24/Cys122 and Cys52/Cys162.

It belongs to the alpha/beta interferon family.

The protein localises to the secreted. Produced by macrophages, IFN-alpha have antiviral activities. Interferon stimulates the production of two enzymes: a protein kinase and an oligoadenylate synthetase. The sequence is that of Interferon alpha-4 (IFNA4) from Homo sapiens (Human).